A 317-amino-acid polypeptide reads, in one-letter code: Ribose-phosphate pyrophosphokinase (317 aa).

ATP contacts are provided by residues 43–45 and 102–103; these read DGE and RQ. Residues lysine 106 and arginine 110 each contribute to the ADP site. Position 136 (histidine 136) interacts with Mg(2+). ADP is bound by residues glutamine 141 and 149 to 150; that span reads DH. Aspartate 175 serves as a coordination point for Mg(2+). Lysine 198 is an active-site residue. Residues arginine 200, aspartate 224, and 228 to 232 each bind D-ribose 5-phosphate; that span reads DTAGT. 311-313 is a binding site for ADP; it reads SVS.

The protein belongs to the ribose-phosphate pyrophosphokinase family. Class I subfamily. As to quaternary structure, homohexamer; trimer of dimers. Mg(2+) serves as cofactor.

Its subcellular location is the cytoplasm. The enzyme catalyses D-ribose 5-phosphate + ATP = 5-phospho-alpha-D-ribose 1-diphosphate + AMP + H(+). The protein operates within metabolic intermediate biosynthesis; 5-phospho-alpha-D-ribose 1-diphosphate biosynthesis; 5-phospho-alpha-D-ribose 1-diphosphate from D-ribose 5-phosphate (route I): step 1/1. Activated by inorganic phosphate, and to a lesser extent by sulfate ions. In addition to form a complex with ATP, Mg(2+) also acts as a cofactor. Strongly inhibited by ADP through competitive binding at the activation site and at a specific allosteric site. Less strongly inhibited by alpha,beta-methylene ATP (mADP), AMP, GDP, GMP and UTP. Involved in the biosynthesis of the central metabolite phospho-alpha-D-ribosyl-1-pyrophosphate (PRPP) via the transfer of pyrophosphoryl group from ATP to 1-hydroxyl of ribose-5-phosphate (Rib-5-P). The chain is Ribose-phosphate pyrophosphokinase from Bacillus subtilis (strain 168).